Here is a 514-residue protein sequence, read N- to C-terminus: 2,3-bisphosphoglycerate-independent phosphoglycerate mutase (514 aa).

Residues Asp-14 and Ser-64 each coordinate Mn(2+). Ser-64 serves as the catalytic Phosphoserine intermediate. Residues His-125, 155–156 (RD), Arg-187, Arg-193, 263–266 (RADR), and Lys-336 each bind substrate. Residues Asp-403, His-407, Asp-444, His-445, and His-463 each contribute to the Mn(2+) site.

This sequence belongs to the BPG-independent phosphoglycerate mutase family. In terms of assembly, monomer. It depends on Mn(2+) as a cofactor.

It catalyses the reaction (2R)-2-phosphoglycerate = (2R)-3-phosphoglycerate. It participates in carbohydrate degradation; glycolysis; pyruvate from D-glyceraldehyde 3-phosphate: step 3/5. Catalyzes the interconversion of 2-phosphoglycerate and 3-phosphoglycerate. This chain is 2,3-bisphosphoglycerate-independent phosphoglycerate mutase, found in Shewanella pealeana (strain ATCC 700345 / ANG-SQ1).